We begin with the raw amino-acid sequence, 968 residues long: Alanine--tRNA ligase, cytoplasmic (968 aa).

The residue at position 1 (methionine 1) is an N-acetylmethionine. Phosphoserine occurs at positions 3 and 8. Lysine 19 bears the N6-acetyllysine mark. ATP-binding positions include arginine 77, histidine 95, tryptophan 176, and 214 to 216 (IWN). 2 residues coordinate L-alanine: asparagine 216 and aspartate 239. Glycine 243 contacts ATP. 2 positions are modified to phosphoserine: serine 399 and serine 555. Histidine 605, histidine 609, cysteine 723, and histidine 727 together coordinate Zn(2+). The Nuclear localization signal signature appears at 750–763 (RRIVAVTGAEAQKA). Lysine 876 is subject to N6-acetyllysine. Lysine 943 carries the post-translational modification N6,N6,N6-trimethyllysine; alternate. Lysine 943 is subject to N6,N6-dimethyllysine; alternate. Lysine 943 carries the post-translational modification N6-methyllysine; alternate.

The protein belongs to the class-II aminoacyl-tRNA synthetase family. Monomer. Interacts with ANKRD16; the interaction is direct. It depends on Zn(2+) as a cofactor. ISGylated. Post-translationally, methylation at 'Lys-943' by METTL21C.

The protein resides in the cytoplasm. It localises to the nucleus. It catalyses the reaction tRNA(Ala) + L-alanine + ATP = L-alanyl-tRNA(Ala) + AMP + diphosphate. It carries out the reaction (S)-lactate + ATP + H(+) = (S)-lactoyl-AMP + diphosphate. The enzyme catalyses (S)-lactoyl-AMP + L-lysyl-[protein] = N(6)-[(S)-lactoyl]-L-lysyl-[protein] + AMP + 2 H(+). Its activity is regulated as follows. The protein lactyltransferase activity is inhibited by beta-alanine. Functionally, catalyzes the attachment of alanine to tRNA(Ala) in a two-step reaction: alanine is first activated by ATP to form Ala-AMP and then transferred to the acceptor end of tRNA(Ala). Also edits incorrectly charged tRNA(Ala) via its editing domain. In presence of high levels of lactate, also acts as a protein lactyltransferase that mediates lactylation of lysine residues in target proteins, such as TEAD1, TP53/p53 and YAP1. Protein lactylation takes place in a two-step reaction: lactate is first activated by ATP to form lactate-AMP and then transferred to lysine residues of target proteins. Acts as an inhibitor of TP53/p53 activity by catalyzing lactylation of TP53/p53. Acts as a positive regulator of the Hippo pathway by mediating lactylation of TEAD1 and YAP1. The sequence is that of Alanine--tRNA ligase, cytoplasmic from Homo sapiens (Human).